The sequence spans 210 residues: Chorismate pyruvate-lyase (210 aa).

It belongs to the chorismate pyruvate-lyase type 2 family.

The enzyme catalyses chorismate = 4-hydroxybenzoate + pyruvate. Functionally, removes the pyruvyl group from chorismate to provide 4-hydroxybenzoate (4HB). Involved in the synthesis of glycosylated p-hydroxybenzoic acid methyl esters (p-HBADs) and phenolic glycolipids (PGL) that play important roles in the pathogenesis of mycobacterial infections. The polypeptide is Chorismate pyruvate-lyase (Mycobacterium leprae (strain TN)).